A 209-amino-acid polypeptide reads, in one-letter code: Large ribosomal subunit protein uL3 (209 aa).

The segment at 141–163 is disordered; it reads RAVGSMGASSDPSRTFKNKRMPG.

It belongs to the universal ribosomal protein uL3 family. In terms of assembly, part of the 50S ribosomal subunit. Forms a cluster with proteins L14 and L19.

Its function is as follows. One of the primary rRNA binding proteins, it binds directly near the 3'-end of the 23S rRNA, where it nucleates assembly of the 50S subunit. In Clostridium botulinum (strain ATCC 19397 / Type A), this protein is Large ribosomal subunit protein uL3.